A 118-amino-acid polypeptide reads, in one-letter code: Large ribosomal subunit protein uL22 (118 aa).

The protein belongs to the universal ribosomal protein uL22 family. In terms of assembly, part of the 50S ribosomal subunit.

Its function is as follows. This protein binds specifically to 23S rRNA; its binding is stimulated by other ribosomal proteins, e.g. L4, L17, and L20. It is important during the early stages of 50S assembly. It makes multiple contacts with different domains of the 23S rRNA in the assembled 50S subunit and ribosome. In terms of biological role, the globular domain of the protein is located near the polypeptide exit tunnel on the outside of the subunit, while an extended beta-hairpin is found that lines the wall of the exit tunnel in the center of the 70S ribosome. This chain is Large ribosomal subunit protein uL22, found in Nostoc punctiforme (strain ATCC 29133 / PCC 73102).